A 729-amino-acid chain; its full sequence is Polyribonucleotide nucleotidyltransferase (729 aa).

Mg(2+)-binding residues include D485 and D491. Residues 552 to 611 enclose the KH domain; that stretch reads PRITTMKVAEDKIRTIIGKGGATIKGLIESTGVSIDIDDSGVVQLFSPDKMALEEAQKQI. Positions 621 to 689 constitute an S1 motif domain; it reads GQTYQGKVSK…KQGRVKLEWK (69 aa).

It belongs to the polyribonucleotide nucleotidyltransferase family. In terms of assembly, component of the RNA degradosome, which is a multiprotein complex involved in RNA processing and mRNA degradation. Requires Mg(2+) as cofactor.

It is found in the cytoplasm. It catalyses the reaction RNA(n+1) + phosphate = RNA(n) + a ribonucleoside 5'-diphosphate. Involved in mRNA degradation. Catalyzes the phosphorolysis of single-stranded polyribonucleotides processively in the 3'- to 5'-direction. In Legionella pneumophila subsp. pneumophila (strain Philadelphia 1 / ATCC 33152 / DSM 7513), this protein is Polyribonucleotide nucleotidyltransferase.